A 125-amino-acid chain; its full sequence is Small ribosomal subunit protein eS26 (125 aa).

Belongs to the eukaryotic ribosomal protein eS26 family.

This is Small ribosomal subunit protein eS26 (RPS26) from Sterkiella nova (Ciliate).